The sequence spans 1014 residues: Exportin-T (1014 aa).

This sequence belongs to the exportin family.

The protein resides in the nucleus. It is found in the cytoplasm. Functionally, tRNA nucleus export receptor which facilitates tRNA translocation across the nuclear pore complex. Involved in pre-tRNA splicing, probably by affecting the interaction of pre-tRNA with splicing endonuclease. This is Exportin-T (LOS1) from Podospora anserina (strain S / ATCC MYA-4624 / DSM 980 / FGSC 10383) (Pleurage anserina).